The chain runs to 151 residues: uncharacterized protein (151 aa).

The N-terminal stretch at 1–24 (MYYSIIIACLVLLLCLVIYVGHRA) is a signal peptide.

It belongs to the asfivirus EP152R family.

The protein resides in the virion. This is an uncharacterized protein from Ornithodoros (relapsing fever ticks).